The sequence spans 154 residues: MRKGKPARKLGRTAAHRRATLNNLSTQLILHKRIETTEAKAKETRKVIEKMITKARKGTVHAQRDIFKDIRDKKAIRILFEEVVAKVGARNGGYTRVIKLAPRLGDAAKMAIIEFVDYSEAISPAASQKSSKQDRAKRVQGSKKNVDAVAESAE.

A disordered region spans residues 125–154; that stretch reads AASQKSSKQDRAKRVQGSKKNVDAVAESAE.

Belongs to the bacterial ribosomal protein bL17 family. Part of the 50S ribosomal subunit. Contacts protein L32.

This Chlorobium chlorochromatii (strain CaD3) protein is Large ribosomal subunit protein bL17.